Consider the following 466-residue polypeptide: Asparagine--tRNA ligase (466 aa).

It belongs to the class-II aminoacyl-tRNA synthetase family. In terms of assembly, homodimer.

It localises to the cytoplasm. It catalyses the reaction tRNA(Asn) + L-asparagine + ATP = L-asparaginyl-tRNA(Asn) + AMP + diphosphate + H(+). The chain is Asparagine--tRNA ligase from Vibrio vulnificus (strain YJ016).